The chain runs to 253 residues: Trypsin delta (253 aa).

The first 22 residues, 1–22, serve as a signal peptide directing secretion; that stretch reads MLKFVILLSAVACALGGTVPEG. Residues 23-30 constitute a propeptide, activation peptide; that stretch reads LLPQLDGR. The 223-residue stretch at 31–253 folds into the Peptidase S1 domain; sequence IVGGSATTIS…ALRSWVISNA (223 aa). A disulfide bridge connects residues Cys-56 and Cys-72. Residues His-71 and Asp-116 each act as charge relay system in the active site. 2 disulfide bridges follow: Cys-180–Cys-197 and Cys-206–Cys-230. The active-site Charge relay system is Ser-210.

The protein belongs to the peptidase S1 family.

Its subcellular location is the secreted. It is found in the extracellular space. It carries out the reaction Preferential cleavage: Arg-|-Xaa, Lys-|-Xaa.. The protein is Trypsin delta of Drosophila melanogaster (Fruit fly).